A 307-amino-acid chain; its full sequence is MIQSHVSVMLNEMLEALSPKAGESYLDCTFGAGGYSKAILESCNCYVTALDRDPNVIKRAEEIQQHYGERFDFVETNFADSFAKLKEKKFDGIVLDLGVSSMQLDIADRGFSFLHDGPLDMRMSGQGLSAEEFVNAAEEKELADVIYKYGDESFSRRIAKRIVEYRKTARIDSTSKLAEIVRSSIGFRKGKIDPATKTFQAIRIYVNDELGELEQFLVNVKNILKKDGRLVVVSFHSLEDRIVKNFFKENSEKPVVRSKYAKDDMTIDPNKWLKIITNKALAPSDKEVGLNIRARSAKLRAAKAIYE.

Residues 33-35, aspartate 51, phenylalanine 78, aspartate 96, and glutamine 103 contribute to the S-adenosyl-L-methionine site; that span reads GGY.

Belongs to the methyltransferase superfamily. RsmH family.

The protein resides in the cytoplasm. It catalyses the reaction cytidine(1402) in 16S rRNA + S-adenosyl-L-methionine = N(4)-methylcytidine(1402) in 16S rRNA + S-adenosyl-L-homocysteine + H(+). Its function is as follows. Specifically methylates the N4 position of cytidine in position 1402 (C1402) of 16S rRNA. In Rickettsia conorii (strain ATCC VR-613 / Malish 7), this protein is Ribosomal RNA small subunit methyltransferase H.